The following is an 814-amino-acid chain: Protein fam-161 (814 aa).

The span at 71 to 87 (ITQHRSSYKVTKSSSCH) shows a compositional bias: polar residues. Disordered stretches follow at residues 71-130 (ITQH…SWSQ), 150-255 (RHQV…ATSA), 569-610 (SRSK…THAT), and 714-814 (MKSA…SSEA). Residues 99–111 (MPRHLDLKPRSSE) are compositionally biased toward basic and acidic residues. Residues 174–193 (STAPSQVSVTSSVQSVAALS) show a composition bias toward low complexity. Polar residues-rich tracts occupy residues 194–207 (GQNPRQQVHATPSH) and 216–235 (RTHQNSRQQVPSATSSTLQN). Residues 236–249 (PRHRTSSASRHHST) are compositionally biased toward basic residues. Polar residues-rich tracts occupy residues 570-583 (RSKSATSRHGNCQE) and 594-610 (ENLPKTSKNRVPSTHAT). Residues 606–689 (STHATQLREE…LAEMKQRVLN (84 aa)) are a coiled coil. Positions 714 to 727 (MKSAKGRGIERVQS) are enriched in basic and acidic residues. The segment covering 728-745 (QEKQQSIGRRSSEVSGSG) has biased composition (polar residues). The segment covering 751-765 (KGYEESFESEDKSEK) has biased composition (basic and acidic residues). 2 stretches are compositionally biased toward low complexity: residues 766 to 779 (SGSSTPSESGSGSE) and 795 to 814 (SKSTSSKSSSSRSTSSSSEA).

It belongs to the FAM161 family. Expressed in amphid and phasmid ciliated neurons.

It is found in the cell projection. The protein resides in the cilium. Its subcellular location is the cytoplasm. It localises to the cytoskeleton. The protein localises to the cilium axoneme. This chain is Protein fam-161, found in Caenorhabditis elegans.